The chain runs to 835 residues: Ribonucleoside-diphosphate reductase large subunit (835 aa).

Substrate is bound by residues Ser222, 237–238 (SC), Gly266, 447–451 (NLCCE), and 660–664 (PSASS). The cysteines at positions 238 and 464 are disulfide-linked. Residue Asn447 is the Proton acceptor of the active site. Residue Cys449 is the Cysteine radical intermediate of the active site. The Proton acceptor role is filled by Glu451.

Belongs to the ribonucleoside diphosphate reductase large chain family. As to quaternary structure, heterotetramer composed of a homodimer of the large subunit (R1) and a homodimer of the small subunit (R2). Larger multisubunit protein complex are also active, composed of (R1)n(R2)n.

The enzyme catalyses a 2'-deoxyribonucleoside 5'-diphosphate + [thioredoxin]-disulfide + H2O = a ribonucleoside 5'-diphosphate + [thioredoxin]-dithiol. Its function is as follows. Ribonucleoside-diphosphate reductase holoenzyme provides the precursors necessary for viral DNA synthesis. Allows virus growth in non-dividing cells. Catalyzes the biosynthesis of deoxyribonucleotides from the corresponding ribonucleotides. This chain is Ribonucleoside-diphosphate reductase large subunit, found in Magallana gigas (Pacific oyster).